Here is a 482-residue protein sequence, read N- to C-terminus: Zinc metalloproteinase/disintegrin (482 aa).

Positions 1–20 are cleaved as a signal peptide; it reads MIQVLLVTICLAAFPYQGSS. Residues 21-189 constitute a propeptide that is removed on maturation; sequence MILESGNVND…IKASQLVVTA (169 aa). The Peptidase M12B domain maps to 197–393; that stretch reads RYIELVVVAD…HNPQCILNEP (197 aa). 2 residues coordinate Ca(2+): E200 and D284. 2 disulfide bridges follow: C308-C388 and C348-C372. H333 lines the Zn(2+) pocket. E334 is an active-site residue. H337 and H343 together coordinate Zn(2+). Positions 388 and 391 each coordinate Ca(2+). Residues 394–409 constitute a propeptide that is removed on maturation; it reads LRTDTVSTPVSGNELL. A Disintegrin domain is found at 401 to 482; it reads TPVSGNELLE…AGCPRNPFHA (82 aa). Disulfide bonds link C415–C430, C417–C425, C424–C447, C438–C444, C443–C468, and C456–C475. Positions 460 to 462 match the Cell attachment site motif; it reads RGD.

The protein belongs to the venom metalloproteinase (M12B) family. P-II subfamily. P-IId sub-subfamily. As to quaternary structure, homodimer; disulfide-linked (disintegrin). It depends on Zn(2+) as a cofactor. As to expression, expressed by the venom gland.

Its subcellular location is the secreted. Its function is as follows. This recombinant protein hydrolyzes fibronectin, but has no effect on type I gelatin and type I to V collagens. Selectively hydrolyzes the Aalpha-chain of fibrinogen (FGA), but has no effect on fibrin. Functionally, inhibits ADP-induced platelet aggregation. In terms of biological role, recombinant metalloproteinase-disintegrin Mt-d-I (393-408): hydrolyzes type I gelatin, type III and V collagens, but has no effect on type I, II, IV collagens and fibronectin. Selectively hydrolyzes the Aalpha-chain of fibrinogen, but has no effect on fibrin. May induce hemorrhage in vascular tissue. Strongly inhibits ADP-induced platelet aggregation. When concentrated, Mt-d-I undergoes autoproteolytic processing into metalloproteinase and disintegrin. The chain is Zinc metalloproteinase/disintegrin from Gloydius brevicauda (Korean slamosa snake).